We begin with the raw amino-acid sequence, 426 residues long: Transcriptional enhancer factor TEF-1 (426 aa).

Residue Met1 is modified to N-acetylmethionine. Polar residues predominate over residues 1–12 (MEPSSWSGSESP). The disordered stretch occupies residues 1-31 (MEPSSWSGSESPAENMERMSDSADKPIDNDA). Ser11 carries the post-translational modification Phosphoserine. Positions 15-28 (NMERMSDSADKPID) are enriched in basic and acidic residues. Residues 28 to 104 (DNDAEGVWSP…QVLARRKSRD (77 aa)) constitute a DNA-binding region (TEA). Lys108 carries the N6-lactoyllysine modification. The transcriptional activation stretch occupies residues 167-426 (GSSQDVKPFV…QHHIYRLVKD (260 aa)).

As to quaternary structure, interacts with YAP1 and WWTR1/TAZ. Lactylation by AARS1 promotes nuclear localization and stabilization of YAP1, leading to increased Hippo signaling pathway. Delactylated by SIRT1. In terms of tissue distribution, preferentially expressed in skeletal muscle. Lower levels in pancreas, placenta, and heart.

The protein resides in the nucleus. Its function is as follows. Transcription factor which plays a key role in the Hippo signaling pathway, a pathway involved in organ size control and tumor suppression by restricting proliferation and promoting apoptosis. The core of this pathway is composed of a kinase cascade wherein MST1/MST2, in complex with its regulatory protein SAV1, phosphorylates and activates LATS1/2 in complex with its regulatory protein MOB1, which in turn phosphorylates and inactivates YAP1 oncoprotein and WWTR1/TAZ. Acts by mediating gene expression of YAP1 and WWTR1/TAZ, thereby regulating cell proliferation, migration and epithelial mesenchymal transition (EMT) induction. Binds specifically and cooperatively to the SPH and GT-IIC 'enhansons' (5'-GTGGAATGT-3') and activates transcription in vivo in a cell-specific manner. The activation function appears to be mediated by a limiting cell-specific transcriptional intermediary factor (TIF). Involved in cardiac development. Binds to the M-CAT motif. The protein is Transcriptional enhancer factor TEF-1 (TEAD1) of Homo sapiens (Human).